The chain runs to 254 residues: Receptor expression-enhancing protein 3 (254 aa).

3 helical membrane passes run 1–21 (MVSW…YPAY), 35–55 (YVRW…ETVA), and 59–79 (LAWF…LLSP). Residues 162-232 (DEPVGHRPYQ…QSMKSVKTIK (71 aa)) are disordered. Over residues 198 to 212 (EQTDEEAEGPFSDDE) the composition is skewed to acidic residues. Phosphothreonine is present on Thr200. A Phosphoserine modification is found at Ser209.

Belongs to the DP1 family.

The protein localises to the endoplasmic reticulum membrane. Its function is as follows. Microtubule-binding protein required to ensure proper cell division and nuclear envelope reassembly by sequestering the endoplasmic reticulum away from chromosomes during mitosis. Probably acts by clearing the endoplasmic reticulum membrane from metaphase chromosomes. In Mus musculus (Mouse), this protein is Receptor expression-enhancing protein 3 (Reep3).